The sequence spans 474 residues: Cyclin-dependent kinase 2 homolog (474 aa).

Residues 7–446 form the Protein kinase domain; it reads YRHVVKLGEG…AAEAVHHPYL (440 aa). ATP is bound by residues 13–21 and K36; that span reads LGEGTYGMV. Position 17 is a phosphothreonine (T17). Y18 is modified (phosphotyrosine). D131 (proton acceptor) is an active-site residue. The tract at residues 150–200 is disordered; the sequence is TALPSSPQQSMRVPHAGGTNGEAGRASANGNEHAPRPTAAEGSVSPWEEAA. S230 carries the phosphoserine modification. The span at 334-354 shows a compositional bias: low complexity; that stretch reads QQLQAQQQQPQQGSSPSHSSS. The tract at residues 334–356 is disordered; sequence QQLQAQQQQPQQGSSPSHSSSRA.

This sequence belongs to the protein kinase superfamily. CMGC Ser/Thr protein kinase family. CDC2/CDKX subfamily. May form a complex composed of at least the catalytic subunit CRK2 and a cyclin. Requires Mg(2+) as cofactor.

Its subcellular location is the cytoplasm. It carries out the reaction L-seryl-[protein] + ATP = O-phospho-L-seryl-[protein] + ADP + H(+). The catalysed reaction is L-threonyl-[protein] + ATP = O-phospho-L-threonyl-[protein] + ADP + H(+). It catalyses the reaction [DNA-directed RNA polymerase] + ATP = phospho-[DNA-directed RNA polymerase] + ADP + H(+). Phosphorylation at Thr-17 or Tyr-18 inactivates the enzyme, while phosphorylation at Ser-230 activates it. Its function is as follows. Serine/threonine-protein kinase. Involved in the control of the cell cycle. Required for entry into S-phase and mitosis. Probable component of the kinase complex that phosphorylates the repetitive C-terminus of RNA polymerase II. In Crithidia fasciculata, this protein is Cyclin-dependent kinase 2 homolog.